The chain runs to 259 residues: Phosphatidylglycerol--prolipoprotein diacylglyceryl transferase (259 aa).

A run of 4 helical transmembrane segments spans residues 9–29, 55–75, 92–112, and 117–137; these read IIFY…VVGI, FITY…VLLY, EGGM…YLFC, and VNFL…LFLG. Position 138 (R138) interacts with a 1,2-diacyl-sn-glycero-3-phospho-(1'-sn-glycerol). 3 consecutive transmembrane segments (helical) span residues 172–192, 201–221, and 228–248; these read QLYE…YATF, GLNS…IEIF, and IGFI…MLIL.

This sequence belongs to the Lgt family.

The protein localises to the cell inner membrane. It carries out the reaction L-cysteinyl-[prolipoprotein] + a 1,2-diacyl-sn-glycero-3-phospho-(1'-sn-glycerol) = an S-1,2-diacyl-sn-glyceryl-L-cysteinyl-[prolipoprotein] + sn-glycerol 1-phosphate + H(+). The protein operates within protein modification; lipoprotein biosynthesis (diacylglyceryl transfer). Its function is as follows. Catalyzes the transfer of the diacylglyceryl group from phosphatidylglycerol to the sulfhydryl group of the N-terminal cysteine of a prolipoprotein, the first step in the formation of mature lipoproteins. This Rickettsia akari (strain Hartford) protein is Phosphatidylglycerol--prolipoprotein diacylglyceryl transferase.